The chain runs to 308 residues: MFVSRLAASGLLLLSLLALSLDGKPLPQRQPHHIQPMEQKWLAPDAPPLEQKWLAPDAPPLEQKWLAPAAPPLEQKWLAPDAPPMEQKWLAPDAPPMEQKWLAPDAPPMEQKWLAPDAPPMEQKWLAPDAAPLEQKWLAPDAPPMEQKWLAPDAPPMEQKWQPQIPSLMEQRQLSSGGTTALRQELSPRAEAASGPAVVGGGGGGGGGSKAALALPKPPKAKGAAAATSRLMRDLRPDGKQASQKWGRLVDHDHDHHHHHHPGSSVGGGGGGGGGGARRLKGLAKKGVAKGCFGLKLDRIGSMSGLGC.

An N-terminal signal peptide occupies residues 1–23 (MFVSRLAASGLLLLSLLALSLDG). A propeptide spanning residues 24-38 (KPLPQRQPHHIQPME) is cleaved from the precursor. Residue glutamine 39 is modified to Pyrrolidone carboxylic acid. A propeptide spanning residues 42-50 (LAPDAPPLE) is cleaved from the precursor. Glutamine 51 is subject to Pyrrolidone carboxylic acid. Positions 54–62 (LAPDAPPLE) are excised as a propeptide. Residue glutamine 63 is modified to Pyrrolidone carboxylic acid. Positions 66-74 (LAPAAPPLE) are excised as a propeptide. Glutamine 75 is modified (pyrrolidone carboxylic acid). The propeptide occupies 78 to 86 (LAPDAPPME). Glutamine 87 is modified (pyrrolidone carboxylic acid). The propeptide occupies 90–98 (LAPDAPPME). Position 99 is a pyrrolidone carboxylic acid (glutamine 99). A propeptide spanning residues 102 to 110 (LAPDAPPME) is cleaved from the precursor. A Pyrrolidone carboxylic acid modification is found at glutamine 111. Residues 114-122 (LAPDAPPME) constitute a propeptide that is removed on maturation. Residue glutamine 123 is modified to Pyrrolidone carboxylic acid. Residues 126–134 (LAPDAAPLE) constitute a propeptide that is removed on maturation. At glutamine 135 the chain carries Pyrrolidone carboxylic acid. The propeptide occupies 138 to 146 (LAPDAPPME). Glutamine 147 carries the pyrrolidone carboxylic acid modification. A propeptide spanning residues 150–158 (LAPDAPPME) is cleaved from the precursor. Glutamine 159 carries the post-translational modification Pyrrolidone carboxylic acid. The propeptide occupies 162–249 (QPQIPSLMEQ…KQASQKWGRL (88 aa)). Positions 172–182 (RQLSSGGTTAL) are enriched in polar residues. Disordered regions lie at residues 172–228 (RQLS…AAAT) and 252–279 (HDHD…GARR). The span at 198–209 (VVGGGGGGGGGS) shows a compositional bias: gly residues. Residues 210 to 227 (KAALALPKPPKAKGAAAA) are compositionally biased toward low complexity. The segment covering 265 to 277 (SVGGGGGGGGGGA) has biased composition (gly residues). Positions 278–286 (RRLKGLAKK) are excised as a propeptide. Cysteine 292 and cysteine 308 are disulfide-bonded.

It in the C-terminal section; belongs to the natriuretic peptide family. This sequence in the central section; belongs to the pHpG family. In terms of tissue distribution, expressed by the venom gland.

The protein resides in the secreted. In terms of biological role, pEKW and poly-His-poly-Gly peptides may serve as metalloproteinase inhibitors during glandular storage. Their inhibition may be instantly disengaged, by dilution or physiochemical change, when venom is injected into tissue of the prey. Functionally, has a vasorelaxant activity in rat aortic strips and a diuretic potency in anesthetized rats. May act by activating natriuretic receptors (NPR1 and/or NPR2). The polypeptide is Snake venom metalloprotease inhibitor 02D01 (Echis ocellatus (Ocellated saw-scaled viper)).